A 411-amino-acid chain; its full sequence is Acetate kinase (411 aa).

Asn7 is a binding site for Mg(2+). Position 14 (Lys14) interacts with ATP. Arg94 contributes to the substrate binding site. Asp151 functions as the Proton donor/acceptor in the catalytic mechanism. ATP is bound by residues 211-215, 285-287, and 333-337; these read HLGNG, DMR, and GIGEN. Mg(2+) is bound at residue Glu387.

Belongs to the acetokinase family. In terms of assembly, homodimer. It depends on Mg(2+) as a cofactor. Requires Mn(2+) as cofactor.

It is found in the cytoplasm. The enzyme catalyses acetate + ATP = acetyl phosphate + ADP. Its pathway is metabolic intermediate biosynthesis; acetyl-CoA biosynthesis; acetyl-CoA from acetate: step 1/2. Catalyzes the formation of acetyl phosphate from acetate and ATP. Can also catalyze the reverse reaction. The polypeptide is Acetate kinase (Syntrophobacter fumaroxidans (strain DSM 10017 / MPOB)).